A 132-amino-acid polypeptide reads, in one-letter code: MVMTDPIADFLTRIRNANQVKHEVLEVPASNIKKGIAEILKREGFVKNVEVIEDDKQGIIRVFLKYGKNGERVITNLKRISKPGLRVYAKRDDMPKVLNGLGIAIISTSEGLLTDKEARQKNVGGEVVAYVW.

Belongs to the universal ribosomal protein uS8 family. In terms of assembly, part of the 30S ribosomal subunit. Contacts proteins S5 and S12.

Functionally, one of the primary rRNA binding proteins, it binds directly to 16S rRNA central domain where it helps coordinate assembly of the platform of the 30S subunit. This chain is Small ribosomal subunit protein uS8, found in Streptococcus pyogenes serotype M49 (strain NZ131).